A 144-amino-acid chain; its full sequence is Elicitor-responsive protein 3 (144 aa).

Positions 1–103 (MVQGTLEVLL…YTEGSIPPTV (103 aa)) constitute a C2 domain. Residues Asp-20, Asp-26, Asp-73, Asp-75, and Asp-81 each contribute to the Ca(2+) site. Positions 123 to 144 (TPEDDRDRGLSEEDIGGWKQSS) are disordered.

Ca(2+) is required as a cofactor.

The sequence is that of Elicitor-responsive protein 3 (ERG3) from Oryza sativa subsp. indica (Rice).